A 473-amino-acid polypeptide reads, in one-letter code: Photosystem II CP43 reaction center protein (473 aa).

A propeptide spanning residues 1–14 is cleaved from the precursor; sequence MKTLYSLRRFYPVE. Position 15 is an N-acetylthreonine (Thr-15). The residue at position 15 (Thr-15) is a Phosphothreonine. The next 5 helical transmembrane spans lie at 69–93, 134–155, 178–200, 255–275, and 291–312; these read LFEV…PHLA, LIGP…KDRN, KALY…RKIT, KPFA…LSYS, and WFNN…ASQA. Glu-367 lines the [CaMn4O5] cluster pocket. A helical transmembrane segment spans residues 447–471; the sequence is RARAAAAGFEKGIDRDFEPVLSMTP.

Belongs to the PsbB/PsbC family. PsbC subfamily. In terms of assembly, PSII is composed of 1 copy each of membrane proteins PsbA, PsbB, PsbC, PsbD, PsbE, PsbF, PsbH, PsbI, PsbJ, PsbK, PsbL, PsbM, PsbT, PsbX, PsbY, PsbZ, Psb30/Ycf12, at least 3 peripheral proteins of the oxygen-evolving complex and a large number of cofactors. It forms dimeric complexes. Binds multiple chlorophylls and provides some of the ligands for the Ca-4Mn-5O cluster of the oxygen-evolving complex. It may also provide a ligand for a Cl- that is required for oxygen evolution. PSII binds additional chlorophylls, carotenoids and specific lipids. is required as a cofactor.

The protein resides in the plastid. It is found in the chloroplast thylakoid membrane. Its function is as follows. One of the components of the core complex of photosystem II (PSII). It binds chlorophyll and helps catalyze the primary light-induced photochemical processes of PSII. PSII is a light-driven water:plastoquinone oxidoreductase, using light energy to abstract electrons from H(2)O, generating O(2) and a proton gradient subsequently used for ATP formation. This Cryptomeria japonica (Japanese cedar) protein is Photosystem II CP43 reaction center protein.